We begin with the raw amino-acid sequence, 210 residues long: Oxygen-insensitive NADPH nitroreductase (210 aa).

150 to 155 (GVSLMG) is a binding site for NADP(+).

Belongs to the nitroreductase family.

Its function is as follows. Reduction of a variety of nitroaromatic compounds using NADPH as source of reducing equivalents; two electrons are transferred. This is Oxygen-insensitive NADPH nitroreductase (rdxA) from Helicobacter acinonychis (strain Sheeba).